The following is a 56-amino-acid chain: Light-harvesting protein B-880 beta chain (56 aa).

The Cytoplasmic portion of the chain corresponds to 1–22 (AEIDRPVSLSGLTEGEAREFHG). 2 residues coordinate a bacteriochlorophyll: H21 and H39. A helical transmembrane segment spans residues 23–45 (VFMTSFMVFIAVAIVAHILAWMW). At 46-56 (RPWIPGPEGYA) the chain is on the periplasmic side.

Belongs to the antenna complex beta subunit family. The core complex is formed by different alpha and beta chains, binding bacteriochlorophyll molecules, and arranged most probably in tetrameric structures disposed around the reaction center. The non-pigmented gamma chains may constitute additional components.

Its subcellular location is the cell inner membrane. Functionally, antenna complexes are light-harvesting systems, which transfer the excitation energy to the reaction centers. The protein is Light-harvesting protein B-880 beta chain of Afifella marina (Rhodobium marinum).